The sequence spans 551 residues: Glucans biosynthesis protein D (551 aa).

Residues 1–32 (MDRRRFIKGSMAMAAVCGTSGIASLFSQAAFA) constitute a signal peptide (tat-type signal).

It belongs to the OpgD/OpgG family. Predicted to be exported by the Tat system. The position of the signal peptide cleavage has not been experimentally proven.

The protein localises to the periplasm. It functions in the pathway glycan metabolism; osmoregulated periplasmic glucan (OPG) biosynthesis. Probably involved in the control of the structural glucose backbone of osmoregulated periplasmic glucans (OPGs). This chain is Glucans biosynthesis protein D, found in Escherichia coli (strain K12 / MC4100 / BW2952).